The primary structure comprises 373 residues: Chaperone protein DnaJ (373 aa).

The J domain occupies Asn4–Gly68. A CR-type zinc finger spans residues Gly136–Gln214. Residues Cys149, Cys152, Cys166, Cys169, Cys188, Cys191, Cys202, and Cys205 each contribute to the Zn(2+) site. CXXCXGXG motif repeat units lie at residues Cys149 to Gly156, Cys166 to Gly173, Cys188 to Gly195, and Cys202 to Gly209.

The protein belongs to the DnaJ family. As to quaternary structure, homodimer. It depends on Zn(2+) as a cofactor.

It is found in the cytoplasm. Participates actively in the response to hyperosmotic and heat shock by preventing the aggregation of stress-denatured proteins and by disaggregating proteins, also in an autonomous, DnaK-independent fashion. Unfolded proteins bind initially to DnaJ; upon interaction with the DnaJ-bound protein, DnaK hydrolyzes its bound ATP, resulting in the formation of a stable complex. GrpE releases ADP from DnaK; ATP binding to DnaK triggers the release of the substrate protein, thus completing the reaction cycle. Several rounds of ATP-dependent interactions between DnaJ, DnaK and GrpE are required for fully efficient folding. Also involved, together with DnaK and GrpE, in the DNA replication of plasmids through activation of initiation proteins. The polypeptide is Chaperone protein DnaJ (Rickettsia africae (strain ESF-5)).